Consider the following 727-residue polypeptide: Epithelial splicing regulatory protein 2 (727 aa).

Residues 1–22 are disordered; sequence MTPPPPPPPPPGPDPAADPAAD. A Phosphoserine modification is found at Ser83. RRM domains are found at residues 257-353, 358-438, and 475-555; these read TVVR…RFLS, VILR…RSTA, and DCVR…PCST. Position 573 is a phosphoserine (Ser573).

Belongs to the ESRP family. As to quaternary structure, interacts with RBPMS. As to expression, epithelial cell-specific.

It is found in the nucleus. In terms of biological role, mRNA splicing factor that regulates the formation of epithelial cell-specific isoforms. Specifically regulates the expression of FGFR2-IIIb, an epithelial cell-specific isoform of FGFR2. Also regulates the splicing of CD44, CTNND1, ENAH, 3 transcripts that undergo changes in splicing during the epithelial-to-mesenchymal transition (EMT). Acts by directly binding specific sequences in mRNAs. Binds the GU-rich sequence motifs in the ISE/ISS-3, a cis-element regulatory region present in the mRNA of FGFR2. This Homo sapiens (Human) protein is Epithelial splicing regulatory protein 2 (ESRP2).